The chain runs to 423 residues: Glutamate--cysteine ligase EgtA (423 aa).

The protein belongs to the glutamate--cysteine ligase type 2 family. EgtA subfamily.

It catalyses the reaction L-cysteine + L-glutamate + ATP = gamma-L-glutamyl-L-cysteine + ADP + phosphate + H(+). The protein operates within amino-acid biosynthesis; ergothioneine biosynthesis. In terms of biological role, catalyzes the synthesis of gamma-glutamylcysteine (gamma-GC). This compound is used as substrate for the biosynthesis of the low-molecular thiol compound ergothioneine. The sequence is that of Glutamate--cysteine ligase EgtA from Mycolicibacterium smegmatis (strain ATCC 700084 / mc(2)155) (Mycobacterium smegmatis).